Here is a 110-residue protein sequence, read N- to C-terminus: Protein YcgL (110 aa).

A YcgL domain is found at 14-98; that stretch reads MFCVIYRSSK…PPEDLLKQHL (85 aa). The segment at 88-110 is disordered; it reads PPPEDLLKQHLSSVGQNTSHADR. Residues 97–110 show a composition bias toward polar residues; sequence HLSSVGQNTSHADR.

The chain is Protein YcgL from Salmonella typhi.